Here is a 757-residue protein sequence, read N- to C-terminus: Cellulose synthase-like protein B5 (757 aa).

The next 2 membrane-spanning stretches (helical) occupy residues 24-44 (AVDLTILGLLYSLLLYRILHI) and 50-70 (VWLLAFFCESCFSLVWLIFTC). Residues Asp-136 and Asp-460 contribute to the active site. Transmembrane regions (helical) follow at residues 531–551 (LAYFWALMCLRSIPELIYCLL), 572–592 (IVTLVGMHCLYSLWQFMSLGF), 613–633 (LFSIQDIILKLLGISQIGFVI), 671–691 (LFIPGTFIMLVNLAALAGYLV), 704–724 (GSGLAEACGCILVVMLFLPFL), and 735–755 (IPLSTLSKAAFLTVLFVFFCV).

It belongs to the glycosyltransferase 2 family. Plant cellulose synthase-like B subfamily. Expressed in young seedlings, primarily in the vascular tissue. Expressed in the root cap.

The protein localises to the golgi apparatus membrane. Its function is as follows. Thought to be a Golgi-localized beta-glycan synthase that polymerize the backbones of noncellulosic polysaccharides (hemicelluloses) of plant cell wall. This is Cellulose synthase-like protein B5 (CSLB5) from Arabidopsis thaliana (Mouse-ear cress).